Reading from the N-terminus, the 170-residue chain is Ureidoglycolate lyase (170 aa).

The protein belongs to the ureidoglycolate lyase family. As to quaternary structure, homodimer. Ni(2+) serves as cofactor.

It carries out the reaction (S)-ureidoglycolate = urea + glyoxylate. It participates in nitrogen metabolism; (S)-allantoin degradation. In terms of biological role, catalyzes the catabolism of the allantoin degradation intermediate (S)-ureidoglycolate, generating urea and glyoxylate. Involved in the utilization of allantoin as nitrogen source. This Burkholderia mallei (strain NCTC 10247) protein is Ureidoglycolate lyase.